The following is a 232-amino-acid chain: Enolase-phosphatase E1 (232 aa).

Belongs to the HAD-like hydrolase superfamily. MasA/MtnC family. In terms of assembly, monomer. The cofactor is Mg(2+).

The enzyme catalyses 5-methylsulfanyl-2,3-dioxopentyl phosphate + H2O = 1,2-dihydroxy-5-(methylsulfanyl)pent-1-en-3-one + phosphate. The protein operates within amino-acid biosynthesis; L-methionine biosynthesis via salvage pathway; L-methionine from S-methyl-5-thio-alpha-D-ribose 1-phosphate: step 3/6. Its pathway is amino-acid biosynthesis; L-methionine biosynthesis via salvage pathway; L-methionine from S-methyl-5-thio-alpha-D-ribose 1-phosphate: step 4/6. Its function is as follows. Bifunctional enzyme that catalyzes the enolization of 2,3-diketo-5-methylthiopentyl-1-phosphate (DK-MTP-1-P) into the intermediate 2-hydroxy-3-keto-5-methylthiopentenyl-1-phosphate (HK-MTPenyl-1-P), which is then dephosphorylated to form the acireductone 1,2-dihydroxy-3-keto-5-methylthiopentene (DHK-MTPene). The sequence is that of Enolase-phosphatase E1 from Xanthomonas euvesicatoria pv. vesicatoria (strain 85-10) (Xanthomonas campestris pv. vesicatoria).